Here is a 498-residue protein sequence, read N- to C-terminus: L-amino acid oxidase Cdc18 (498 aa).

The first 2 residues, 1 to 2 (SC), serve as a signal peptide directing secretion. Cys-12 and Cys-173 are joined by a disulfide. Residues 45 to 46 (MA), 65 to 66 (EA), Arg-73, and 87 to 90 (GPMR) each bind FAD. Residues Arg-90 and His-223 each contribute to the substrate site. Val-263 is a binding site for FAD. Cysteines 333 and 414 form a disulfide. N-linked (GlcNAc...) asparagine glycosylation is present at Asn-363. Substrate is bound at residue Tyr-374. Residues Glu-459 and 466–471 (GWIDST) contribute to the FAD site. Residue 466–467 (GW) coordinates substrate.

Belongs to the flavin monoamine oxidase family. FIG1 subfamily. In terms of assembly, monomer. This is in contrast with most of its orthologs, that are non-covalently linked homodimers. It depends on FAD as a cofactor. As to expression, expressed by the venom gland.

It is found in the secreted. The catalysed reaction is an L-alpha-amino acid + O2 + H2O = a 2-oxocarboxylate + H2O2 + NH4(+). The enzyme catalyses L-leucine + O2 + H2O = 4-methyl-2-oxopentanoate + H2O2 + NH4(+). In terms of biological role, catalyzes an oxidative deamination of predominantly hydrophobic and aromatic L-amino acids, thus producing hydrogen peroxide that may contribute to the diverse toxic effects of this enzyme. Shows activity on L-Leu. Damages cell membranes of the Gram-positive bacteria S.aureus (MIC=8 ug/ml and MBC=16 ug/ml) and the Gram-negative bacteria A.baumannii (MIC=16 ug/ml and MBC=32 ug/ml). This antimicrobial activity is dependent on the production of hydrogen peroxyde, since it is inhibited by catalase, a hydrogen peroxyde scavenger. The polypeptide is L-amino acid oxidase Cdc18 (Crotalus durissus cumanensis (South American rattlesnake)).